The chain runs to 248 residues: ATP synthase subunit a, chloroplastic (248 aa).

Transmembrane regions (helical) follow at residues 38-58 (QVLLTSWVVIAVLLGSATIAV), 96-116 (VPFIGTMFLFIFVSNWSGALL), 135-155 (INTTVALALLTSVAYFYAGLT), 200-220 (LVVAVLVSLVPLIVPIPVMFL), and 221-241 (GLFTSGIQALIFATLAAAYIG).

This sequence belongs to the ATPase A chain family. In terms of assembly, F-type ATPases have 2 components, CF(1) - the catalytic core - and CF(0) - the membrane proton channel. CF(1) has five subunits: alpha(3), beta(3), gamma(1), delta(1), epsilon(1). CF(0) has four main subunits: a, b, b' and c.

The protein resides in the plastid. It localises to the chloroplast thylakoid membrane. Functionally, key component of the proton channel; it plays a direct role in the translocation of protons across the membrane. This Pinus thunbergii (Japanese black pine) protein is ATP synthase subunit a, chloroplastic.